Consider the following 105-residue polypeptide: Immunoglobulin lambda-like polypeptide 1 (105 aa).

The tract at residues 1 to 105 is c region; it reads QPKSDPLVTL…EKSVSPAECS (105 aa). In terms of domain architecture, Ig-like C1-type spans 6 to 100; the sequence is PLVTLFLPSL…EGNTVEKSVS (95 aa). Cysteine 27 and cysteine 86 form a disulfide bridge.

As to quaternary structure, associates non-covalently with VPREB1A. Interacts with SYNV1/HRD1 (via N-terminus); this interaction leads to increased IGLL1 ubiquitination and degradation in pre-B cells, possibly through a lysosomal, not proteasomal, pathway.

It localises to the endoplasmic reticulum. The protein localises to the secreted. In terms of biological role, critical for B-cell development. This is Immunoglobulin lambda-like polypeptide 1 (Igll1) from Mus spretus (Western Mediterranean mouse).